Consider the following 259-residue polypeptide: Small ribosomal subunit protein uS2 (259 aa).

Belongs to the universal ribosomal protein uS2 family.

In Fervidobacterium nodosum (strain ATCC 35602 / DSM 5306 / Rt17-B1), this protein is Small ribosomal subunit protein uS2.